We begin with the raw amino-acid sequence, 613 residues long: Portal protein (613 aa).

The segment at 577 to 613 (ATGGDHGIRQAPSARGDAEPDHAKSKPARDPPPGAGS) is disordered. The segment covering 592–605 (GDAEPDHAKSKPAR) has biased composition (basic and acidic residues).

The protein belongs to the herpesviridae portal protein family. Homododecamerizes. Interacts with terminase subunits TRM1 and TRM3.

The protein localises to the virion. It localises to the host nucleus. Forms a portal in the viral capsid through which viral DNA is translocated during DNA packaging. Assembles as a dodecamer at a single fivefold axe of the T=16 icosahedric capsid. Binds to the molecular motor that translocates the viral DNA, termed terminase. The protein is Portal protein of Homo sapiens (Human).